The following is a 369-amino-acid chain: Aspartate beta-hydroxylase domain-containing protein 2 (369 aa).

Over 1-58 (MVWAPLGPPRTDCLTLLHTPSKDSPKMSLEWLVAWSWSLDGLRDCIATGIQSVRDCDT) the chain is Cytoplasmic. Residues 59–79 (TAVITVACLLVLFVWYCYHVG) traverse the membrane as a helical segment. At 80 to 369 (REQPRPYVSV…ALDFIFAPGR (290 aa)) the chain is on the lumenal side. The N-linked (GlcNAc...) asparagine glycan is linked to asparagine 211. Residues tryptophan 228 and serine 272 each coordinate 2-oxoglutarate. Histidine 283 is a binding site for Fe cation. 292-294 (RCH) contributes to the 2-oxoglutarate binding site. Histidine 328 is a binding site for Fe cation. Arginine 341 contacts 2-oxoglutarate.

It belongs to the aspartyl/asparaginyl beta-hydroxylase family. Requires Fe cation as cofactor.

It is found in the membrane. Its function is as follows. May function as 2-oxoglutarate-dependent dioxygenase. The protein is Aspartate beta-hydroxylase domain-containing protein 2 (ASPHD2) of Homo sapiens (Human).